The primary structure comprises 197 residues: Large ribosomal subunit protein bL17 (197 aa).

The interval 136–197 is disordered; sequence RAAKKADAPQ…DAEKSSDTEK (62 aa). The segment covering 148–187 has biased composition (acidic residues); that stretch reads VADEATDADESVEDEAPAQDDSADEVEAAADETPADDAEA. Residues 188-197 show a composition bias toward basic and acidic residues; sequence DAEKSSDTEK.

Belongs to the bacterial ribosomal protein bL17 family. As to quaternary structure, part of the 50S ribosomal subunit. Contacts protein L32.

The sequence is that of Large ribosomal subunit protein bL17 from Beutenbergia cavernae (strain ATCC BAA-8 / DSM 12333 / CCUG 43141 / JCM 11478 / NBRC 16432 / NCIMB 13614 / HKI 0122).